A 193-amino-acid polypeptide reads, in one-letter code: Probable gluconokinase (193 aa).

18–25 (GTAGTGKS) lines the ATP pocket.

It belongs to the gluconokinase GntK/GntV family.

It is found in the cytoplasm. It catalyses the reaction D-gluconate + ATP = 6-phospho-D-gluconate + ADP + H(+). The protein operates within carbohydrate acid metabolism; D-gluconate degradation. This Saccharomyces cerevisiae (strain ATCC 204508 / S288c) (Baker's yeast) protein is Probable gluconokinase.